Reading from the N-terminus, the 528-residue chain is Low affinity inorganic phosphate transporter 4 (528 aa).

At 1-18 (MGLEVLEALDSARTQWYH) the chain is on the cytoplasmic side. A helical transmembrane segment spans residues 19-39 (VTAIVIAGMGFFTDAYDLFCI). The Extracellular segment spans residues 40 to 68 (STVSKLLGRLYYFDPSTNKPGKLPPSVNN). Residues 69–89 (VVTGVALVGTLSGQLVFGWLG) form a helical membrane-spanning segment. Over 90–96 (DKLGRKK) the chain is Cytoplasmic. A helical membrane pass occupies residues 97–117 (VYGVTLIIMVACAICSGLSFG). The Extracellular segment spans residues 118-122 (SSAKS). The helical transmembrane segment at 123–143 (VMITLCFFRFWLGFGIGGDYP) threads the bilayer. The Cytoplasmic portion of the chain corresponds to 144-158 (LSATIMSEYANKRTR). The chain crosses the membrane as a helical span at residues 159 to 179 (GAFIAAVFAMQGVGIIFAGLV). At 180-208 (SMVFSGIFKAYYQAPRFNEDPILSTQPEG) the chain is on the extracellular side. The helical transmembrane segment at 209–229 (DLLWRLILMIGAVPAAMTYYW) threads the bilayer. Residues 230–292 (RMKMPETGRY…SEFFNRHGRH (63 aa)) lie on the Cytoplasmic side of the membrane. Residues 293–313 (LIGTMSCWFLLDIAFYSQNLT) form a helical membrane-spanning segment. The Extracellular segment spans residues 314 to 341 (QKDIYPAMGLIRQDKEMNAIDEVFQTSR). The helical transmembrane segment at 342-362 (AMFVVALFGTFPGYWFTVFFI) threads the bilayer. The Cytoplasmic segment spans residues 363–371 (EKLGRFKIQ). A helical membrane pass occupies residues 372-392 (LVGFFMMSFFMFVIGVKYEYL). The Extracellular portion of the chain corresponds to 393-401 (KDENKNLFA). The helical transmembrane segment at 402–422 (LLYGLTFFFANFGPNSTTFVL) threads the bilayer. Residues 423–433 (PAELFPTRVRS) lie on the Cytoplasmic side of the membrane. Residues 434-454 (TCHAFSAASGKAGAMVGAFGI) form a helical membrane-spanning segment. Residues 455 to 468 (QYYTLDGTPRKIRR) are Extracellular-facing. Residues 469–489 (AMMILAFTNLIGFFCTFLVTE) form a helical membrane-spanning segment. Residues 490–528 (TKGRSLEEISGEDGRESELTATPNDRAPGIRQDSRTEKM) are Cytoplasmic-facing. The segment covering 497–507 (EISGEDGRESE) has biased composition (basic and acidic residues). The disordered stretch occupies residues 497 to 528 (EISGEDGRESELTATPNDRAPGIRQDSRTEKM).

It belongs to the major facilitator superfamily. Phosphate:H(+) symporter (TC 2.A.1.9) family. In terms of tissue distribution, mostly expressed in mycorrhizal roots. Also observed in root tips of non-mycorrhizal roots, in a phosphate (Pi) depended-manner, highest expression levels being observed in low Pi conditions.

The protein resides in the cell membrane. It carries out the reaction phosphate(in) + H(+)(in) = phosphate(out) + H(+)(out). Its function is as follows. Low-affinity transporter for external inorganic phosphate (Pi) probably involved in the acquisition of phosphate released by arbuscular mycorrhizal (AM) fungi (e.g. Gigaspora gigantea, Glomus versiforme and G.intraradices) during AM symbiosis; required for propper mycorrhizal arbuscule morphology. Acts as a Pi-sensing machinery at the root tip level, independently of AM fungi, involved in the regulation of early root branching and lateral roots formation. This chain is Low affinity inorganic phosphate transporter 4, found in Medicago truncatula (Barrel medic).